The following is a 100-amino-acid chain: UPF0213 protein YhbQ (100 aa).

The GIY-YIG domain occupies 2–77 (TPWFLYLIRT…KQLTKRQKER (76 aa)).

The protein belongs to the UPF0213 family.

This is UPF0213 protein YhbQ from Escherichia coli O127:H6 (strain E2348/69 / EPEC).